The sequence spans 190 residues: Cytoplasmic envelopment protein 3 (190 aa).

G2 carries N-myristoyl glycine; by host lipidation. The interval 27-190 is disordered; the sequence is RQVSLRSYDN…TKKPAASLPF (164 aa). A compositionally biased stretch (polar residues) spans 30–43; that stretch reads SLRSYDNIPPTSSS. Residues 44–58 are compositionally biased toward acidic residues; the sequence is DEGEDDDDGEDDDNE. Positions 80–90 are enriched in basic and acidic residues; the sequence is SHREATHDGSK. Basic residues predominate over residues 108 to 123; sequence KQSKKKKKPSKHHHHQ. The span at 130–139 shows a compositional bias: acidic residues; the sequence is ETDDLDEEDT.

This sequence belongs to the herpesviridae cytoplasmic envelopment protein 3 family. In terms of assembly, interacts with cytoplasmic envelopment protein 2; this interaction is essential for the proper localization of each protein to the assembly complex and thus for the production of infectious virus. Myristoylation and palmitoylation (probably on one or more of the nearby cysteines at the N-terminus) enable membrane-binding and Golgi apparatus-specific targeting and are essential for efficient packaging. Post-translationally, phosphorylated. Phosphorylation does not seem to be required for recycling to the host Golgi apparatus. Packaging is selective for underphosphorylated forms.

The protein localises to the virion tegument. It localises to the virion membrane. Its subcellular location is the host cell membrane. The protein resides in the host Golgi apparatus membrane. Its function is as follows. Plays an important role in the cytoplasmic envelopment of tegument proteins and capsids during the assembly and egress processes. Also participates in viral entry at the fusion step probably by regulating the core fusion machinery. This chain is Cytoplasmic envelopment protein 3 (UL99), found in Human cytomegalovirus (strain AD169) (HHV-5).